Consider the following 100-residue polypeptide: Large ribosomal subunit protein uL23 (100 aa).

This sequence belongs to the universal ribosomal protein uL23 family. Part of the 50S ribosomal subunit. Contacts protein L29, and trigger factor when it is bound to the ribosome.

Its function is as follows. One of the early assembly proteins it binds 23S rRNA. One of the proteins that surrounds the polypeptide exit tunnel on the outside of the ribosome. Forms the main docking site for trigger factor binding to the ribosome. The protein is Large ribosomal subunit protein uL23 of Parasynechococcus marenigrum (strain WH8102).